The chain runs to 545 residues: Chaperonin GroEL 2 (545 aa).

ATP-binding positions include 29–32 (TLGP), 86–90 (DGTTT), G413, 479–481 (NAA), and D495.

Belongs to the chaperonin (HSP60) family. In terms of assembly, forms a cylinder of 14 subunits composed of two heptameric rings stacked back-to-back. Interacts with the co-chaperonin GroES.

The protein resides in the cytoplasm. The catalysed reaction is ATP + H2O + a folded polypeptide = ADP + phosphate + an unfolded polypeptide.. Together with its co-chaperonin GroES, plays an essential role in assisting protein folding. The GroEL-GroES system forms a nano-cage that allows encapsulation of the non-native substrate proteins and provides a physical environment optimized to promote and accelerate protein folding. The protein is Chaperonin GroEL 2 of Prochlorococcus marinus (strain MIT 9312).